The chain runs to 583 residues: Asparagine synthetase, root [glutamine-hydrolyzing] (583 aa).

Residue C2 is the For GATase activity of the active site. Residues 2 to 185 (CGILAVLGCS…PGHLYSSKDS (184 aa)) form the Glutamine amidotransferase type-2 domain. L-glutamine contacts are provided by residues 50-54 (RLAIV), 75-77 (NGE), and D98. ATP contacts are provided by residues L231, V267, and 341–342 (SG). Positions 237–516 (DSSLVASITS…PQNSARLTVP (280 aa)) constitute an Asparagine synthetase domain.

As to expression, roots.

The catalysed reaction is L-aspartate + L-glutamine + ATP + H2O = L-asparagine + L-glutamate + AMP + diphosphate + H(+). It participates in amino-acid biosynthesis; L-asparagine biosynthesis; L-asparagine from L-aspartate (L-Gln route): step 1/1. The polypeptide is Asparagine synthetase, root [glutamine-hydrolyzing] (AS2) (Pisum sativum (Garden pea)).